Consider the following 100-residue polypeptide: Replication restart protein PriB (100 aa).

The SSB domain maps to Met1–Ile100.

The protein belongs to the PriB family. As to quaternary structure, homodimer. Interacts with PriA and DnaT. Component of the replication restart primosome. Primosome assembly occurs via a 'hand-off' mechanism. PriA binds to replication forks, subsequently PriB then DnaT bind; DnaT then displaces ssDNA to generate the helicase loading substrate.

Functionally, involved in the restart of stalled replication forks, which reloads the replicative helicase on sites other than the origin of replication; the PriA-PriB pathway is the major replication restart pathway. During primosome assembly it facilitates complex formation between PriA and DnaT on DNA; stabilizes PriA on DNA. Stimulates the DNA unwinding activity of PriA helicase. This Vibrio cholerae serotype O1 (strain ATCC 39315 / El Tor Inaba N16961) protein is Replication restart protein PriB.